The chain runs to 155 residues: Riboflavin kinase (155 aa).

ATP is bound by residues glycine 15, lysine 21, threonine 27, and asparagine 29. Residues threonine 27 and asparagine 29 each coordinate Mg(2+). Residue glutamate 79 is the Nucleophile of the active site. ATP is bound by residues isoleucine 82, histidine 84, and tyrosine 91. FMN-binding residues include arginine 104, lysine 107, and phenylalanine 109.

Monomer. Directly interacts with TNFRSF1A death domain. TNFRSF1A-binding may be supported by TRADD. In the absence of TNFRSF1A, interacts with TRADD. Independently of TNFRSF1A, interacts with the NADPH oxidase subunit CYBA. Zn(2+) is required as a cofactor. It depends on Mg(2+) as a cofactor. In terms of tissue distribution, detected in brain, placenta and urinary bladder.

It is found in the cytoplasm. The catalysed reaction is riboflavin + ATP = FMN + ADP + H(+). The protein operates within cofactor biosynthesis; FMN biosynthesis; FMN from riboflavin (ATP route): step 1/1. Functionally, catalyzes the phosphorylation of riboflavin (vitamin B2) to form flavin-mononucleotide (FMN), hence rate-limiting enzyme in the synthesis of FAD. Essential for TNF-induced reactive oxygen species (ROS) production. Through its interaction with both TNFRSF1A and CYBA, physically and functionally couples TNFRSF1A to NADPH oxidase. TNF-activation of RFK may enhance the incorporation of FAD in NADPH oxidase, a critical step for the assembly and activation of NADPH oxidase. The protein is Riboflavin kinase (RFK) of Homo sapiens (Human).